Consider the following 1185-residue polypeptide: Chromosome partition protein Smc (1185 aa).

Proline 32 to asparagine 39 contacts ATP. Residues isoleucine 167–serine 494 adopt a coiled-coil conformation. The region spanning threonine 521–alanine 639 is the SMC hinge domain. Residues arginine 677–methionine 1031 are a coiled coil.

It belongs to the SMC family. As to quaternary structure, homodimer.

It localises to the cytoplasm. In terms of biological role, required for chromosome condensation and partitioning. This Halothermothrix orenii (strain H 168 / OCM 544 / DSM 9562) protein is Chromosome partition protein Smc.